The chain runs to 489 residues: Ribonuclease G (489 aa).

Residues 39-128 (GNIYKGRVSR…LTTDITLPSR (90 aa)) form the S1 motif domain. Residues Asp304 and Asp347 each contribute to the Mg(2+) site.

The protein belongs to the RNase E/G family. RNase G subfamily. In terms of assembly, homodimer, in equilibrium with possible higher multimers. Requires Mg(2+) as cofactor.

Its subcellular location is the cytoplasm. An endonuclease that acts in the processing of the 5'-end of 16S rRNA and 23S rRNA. It prefers 5'-monophosphorylated substrates and cleaves single-stranded sites rich in A and U residues; contributes to tRNA processing and mRNA turnover. In Escherichia coli O157:H7, this protein is Ribonuclease G (rng).